The sequence spans 310 residues: E3 ubiquitin-protein ligase CSU1 (310 aa).

The segment at 43-67 (CSLCLKPFIDPMCCHKGHVFCRECI) adopts an RING-type 1; degenerate zinc-finger fold. Residues 75–95 (KKDIQRRLAAHSSQKKQDKDE) are a coiled coil. Positions 110-138 (EFDQQNHSAMPRNSDKNHNEDKNGFHGAN) are disordered. Residues 122-133 (NSDKNHNEDKNG) show a composition bias toward basic and acidic residues. An RING-type 2 zinc finger spans residues 221–263 (CPSCKVTLTNTMSLVALSSCGHVFCKKCAEKFMPVDKVCLVCD).

This sequence belongs to the NOSIP family.

Its subcellular location is the nucleus. The protein localises to the nucleus speckle. The catalysed reaction is S-ubiquitinyl-[E2 ubiquitin-conjugating enzyme]-L-cysteine + [acceptor protein]-L-lysine = [E2 ubiquitin-conjugating enzyme]-L-cysteine + N(6)-ubiquitinyl-[acceptor protein]-L-lysine.. It functions in the pathway protein modification; protein ubiquitination. In terms of biological role, RING-finger E3 ubiquitin-protein ligase that plays an major role in maintaining COP1 homeostasis in darkness. Negatively regulates COP1 protein accumulation by targeting COP1 for ubiquitination and subsequent proteasomal degradation in dark-grown seedlings. Negatively regulates the accumulation of SPA1 protein in the dark. The sequence is that of E3 ubiquitin-protein ligase CSU1 from Arabidopsis thaliana (Mouse-ear cress).